Here is a 123-residue protein sequence, read N- to C-terminus: MENSLFKKSEKKVHRALRVRKVLRGSSLKPRLCVVKTNKHIYVQLIDDSIGKTLASVSTMAKSNKASGLIKKNQDVAKTLGTQIAEIGKSLQVDRVVFDRGPFKYHGIIAMVADGAREGGLQF.

It belongs to the universal ribosomal protein uL18 family. As to quaternary structure, part of the 50S ribosomal subunit; part of the 5S rRNA/L5/L18/L25 subcomplex. Contacts the 5S and 23S rRNAs.

In terms of biological role, this is one of the proteins that bind and probably mediate the attachment of the 5S RNA into the large ribosomal subunit, where it forms part of the central protuberance. This Chlamydia caviae (strain ATCC VR-813 / DSM 19441 / 03DC25 / GPIC) (Chlamydophila caviae) protein is Large ribosomal subunit protein uL18.